The sequence spans 512 residues: Photosystem II CP47 reaction center protein (512 aa).

Helical transmembrane passes span alanine 21–serine 36, isoleucine 101–tryptophan 115, glycine 140–phenylalanine 156, isoleucine 203–serine 218, valine 237–valine 252, and threonine 457–arginine 472.

This sequence belongs to the PsbB/PsbC family. PsbB subfamily. PSII is composed of 1 copy each of membrane proteins PsbA, PsbB, PsbC, PsbD, PsbE, PsbF, PsbH, PsbI, PsbJ, PsbK, PsbL, PsbM, PsbT, PsbX, PsbY, PsbZ, Psb30/Ycf12, at least 3 peripheral proteins of the oxygen-evolving complex and a large number of cofactors. It forms dimeric complexes. Binds multiple chlorophylls. PSII binds additional chlorophylls, carotenoids and specific lipids. is required as a cofactor.

The protein localises to the plastid. Its subcellular location is the chloroplast thylakoid membrane. One of the components of the core complex of photosystem II (PSII). It binds chlorophyll and helps catalyze the primary light-induced photochemical processes of PSII. PSII is a light-driven water:plastoquinone oxidoreductase, using light energy to abstract electrons from H(2)O, generating O(2) and a proton gradient subsequently used for ATP formation. The protein is Photosystem II CP47 reaction center protein of Physcomitrium patens (Spreading-leaved earth moss).